The following is a 1040-amino-acid chain: Kinesin-like protein KIN-14H (1040 aa).

In terms of domain architecture, Calponin-homology (CH) spans aspartate 54 to glutamate 176. The tract at residues serine 208–threonine 242 is disordered. The segment covering valine 215–threonine 242 has biased composition (polar residues). In terms of domain architecture, Kinesin motor spans serine 434 to valine 754. ATP is bound at residue glycine 517 to threonine 524. A coiled-coil region spans residues valine 761–arginine 796. Over residues leucine 809–serine 818 the composition is skewed to low complexity. Disordered regions lie at residues leucine 809 to glutamate 871, glutamate 887 to serine 926, and methionine 969 to lysine 1040. The segment covering isoleucine 840 to aspartate 851 has biased composition (polar residues). Over residues glutamate 887–lysine 923 the composition is skewed to basic and acidic residues. Residues serine 1018–valine 1031 show a composition bias toward polar residues.

Belongs to the TRAFAC class myosin-kinesin ATPase superfamily. Kinesin family. KIN-14 subfamily.

The protein is Kinesin-like protein KIN-14H of Arabidopsis thaliana (Mouse-ear cress).